The following is an 813-amino-acid chain: Sorting nexin-29 (813 aa).

Residues 36-180 form the RUN domain; sequence SDSDSRVTCL…ILFAINIDNK (145 aa). Phosphoserine is present on residues Ser268, Ser291, Ser292, Ser330, and Ser344. The disordered stretch occupies residues 269–299; sequence FDDEEDEQNSGDVFKKTPGAGESSEDNSDRS. Positions 346 to 357 are enriched in acidic residues; that stretch reads DDEDVDENEDDV. The segment at 346 to 378 is disordered; that stretch reads DDEDVDENEDDVYGNSSGRKHRGHSESPEKPLE. Ser445 and Ser450 each carry phosphoserine. A coiled-coil region spans residues 466–545; sequence TISELRQATV…VLKVQLKKYV (80 aa). Phosphoserine is present on Ser639. Position 641 is a phosphothreonine (Thr641). A phosphoserine mark is found at Ser642 and Ser646. Residues 656–779 enclose the PX domain; that stretch reads ALINVWIPSV…PFFVDITPPG (124 aa). A disordered region spans residues 778-813; it reads PGEPVNSRPKAASRFPKLSRGQPRETRNVEPQSGDL.

This sequence belongs to the sorting nexin family.

This Homo sapiens (Human) protein is Sorting nexin-29 (SNX29).